The primary structure comprises 441 residues: Deoxyguanosinetriphosphate triphosphohydrolase-like protein (441 aa).

The HD domain maps to 59–250 (RLTHSLEVSQ…MELADDTAYA (192 aa)).

This sequence belongs to the dGTPase family. Type 2 subfamily.

The polypeptide is Deoxyguanosinetriphosphate triphosphohydrolase-like protein (Shewanella loihica (strain ATCC BAA-1088 / PV-4)).